The following is a 101-amino-acid chain: Small ribosomal subunit protein uS10 (101 aa).

It belongs to the universal ribosomal protein uS10 family. In terms of assembly, part of the 30S ribosomal subunit.

In terms of biological role, involved in the binding of tRNA to the ribosomes. In Mycobacterium avium (strain 104), this protein is Small ribosomal subunit protein uS10.